The sequence spans 446 residues: Glucarate dehydratase-related protein (446 aa).

Residues H31, T104, Y149, and K204 each coordinate substrate. K206 functions as the Proton acceptor in the catalytic mechanism. Positions 234, 265, and 288 each coordinate Mg(2+). 234–236 serves as a coordination point for substrate; the sequence is DPN. Residues N288, 338–340, H367, and R421 contribute to the substrate site; that span reads HSN. The Proton acceptor role is filled by H338.

This sequence belongs to the mandelate racemase/muconate lactonizing enzyme family. GlucD subfamily. A divalent metal cation serves as cofactor.

Does not seem to have an in-vivo activity on glucarate or idarate. Its real substrate is unknown. The sequence is that of Glucarate dehydratase-related protein (gudX) from Escherichia coli (strain K12).